An 862-amino-acid polypeptide reads, in one-letter code: Phosphatidic acid phosphohydrolase 1 (862 aa).

Positions 19–104 are N-LIP; sequence NPATLSGAID…VPDELLVSPV (86 aa). 2 disordered regions span residues 104–183 and 300–341; these read VMSA…SVEE and GSTL…AGSG. A compositionally biased stretch (polar residues) spans 105–117; sequence MSATSSPPQSPET. A phosphoserine mark is found at S110 and S114. Basic and acidic residues predominate over residues 132-143; that stretch reads NENKKKEKKVLE. Composition is skewed to low complexity over residues 161–179 and 300–313; these read SETTGSLSPTESSTTTPPD and GSTLNSLSSSPSGS. A Phosphoserine modification is found at S168. A DXDXT motif motif is present at residues 398-402; that stretch reads DIDGT. An N6-acetyllysine modification is found at K496. At S511 the chain carries Phosphoserine. The residue at position 602 (S602) is a Phosphoserine; by CDC28. The segment at 648–732 is disordered; it reads SDISNDDSDN…TPNKSTMSKG (85 aa). Positions 651-663 are enriched in acidic residues; sequence SNDDSDNIDEDTD. Composition is skewed to polar residues over residues 664 to 679 and 687 to 699; these read VSQQSNISRNRANSVK and PQRNVSGSTNNNE. Low complexity predominate over residues 710–730; it reads ASDLVSSHSSSGSTPNKSTMS. At T723 the chain carries Phosphothreonine; by CDC28. At S744 the chain carries Phosphoserine; by CDC28. S748, S773, and S774 each carry phosphoserine. A disordered region spans residues 757-780; sequence MDDEDSNYNRTKSRRASSAAATSI. K801 carries the N6-acetyllysine modification. Residues 807-862 are disordered; it reads DVHSLGNSDTESRREQSVNETGRNQLPHNSMDDKDLDSRVSDEFDDDEFDEDEFED. Residues S810 and S814 each carry the phosphoserine modification. At T816 the chain carries Phosphothreonine. Over residues 824–834 the composition is skewed to polar residues; the sequence is VNETGRNQLPH. The span at 836-848 shows a compositional bias: basic and acidic residues; sequence SMDDKDLDSRVSD. Residues S844 and S847 each carry the phosphoserine modification. Over residues 849-862 the composition is skewed to acidic residues; it reads EFDDDEFDEDEFED.

The protein belongs to the lipin family. It depends on Mg(2+) as a cofactor. In terms of processing, acetylation at Lys-496 and Lys-801 by ESA1 promotes synthesis of diacylglycerol. Phosphorylated by CDC28 at the onset of mitosis, and dephosphorylated by the NEM1-SPO7 complex. Phosphorylation regulates recruitment on promoters of lipid biosynthetic enzymes.

It localises to the cytoplasm. It is found in the nucleus membrane. The protein resides in the endoplasmic reticulum membrane. It carries out the reaction a 1,2-diacyl-sn-glycero-3-phosphate + H2O = a 1,2-diacyl-sn-glycerol + phosphate. Its activity is regulated as follows. Phenylglyoxal and propranolol inhibit activity in dose-dependent manners with IC(50) values of 1.3 mM and 0.2 mM, respectively. Sertraline inhibits activity in a dose-dependent manner with an IC(50) value of 85 uM; the inhibitory effects of sertraline and propranolol are additive. Its function is as follows. Mg(2+)-dependent phosphatidate (PA) phosphatase which catalyzes the dephosphorylation of PA to yield diacylglycerol. Required for de novo lipid synthesis and formation of lipid droplets. Controls transcription of phospholipid biosynthetic genes and nuclear structure by regulating the amount of membrane present at the nuclear envelope. Involved in plasmid maintenance, in respiration and in cell proliferation. The chain is Phosphatidic acid phosphohydrolase 1 (PAH1) from Saccharomyces cerevisiae (strain ATCC 204508 / S288c) (Baker's yeast).